Here is a 150-residue protein sequence, read N- to C-terminus: D-aminoacyl-tRNA deacylase (150 aa).

Positions 137–138 match the Gly-cisPro motif, important for rejection of L-amino acids motif; that stretch reads GP.

This sequence belongs to the DTD family. In terms of assembly, homodimer.

Its subcellular location is the cytoplasm. The catalysed reaction is glycyl-tRNA(Ala) + H2O = tRNA(Ala) + glycine + H(+). It carries out the reaction a D-aminoacyl-tRNA + H2O = a tRNA + a D-alpha-amino acid + H(+). Its function is as follows. An aminoacyl-tRNA editing enzyme that deacylates mischarged D-aminoacyl-tRNAs. Also deacylates mischarged glycyl-tRNA(Ala), protecting cells against glycine mischarging by AlaRS. Acts via tRNA-based rather than protein-based catalysis; rejects L-amino acids rather than detecting D-amino acids in the active site. By recycling D-aminoacyl-tRNA to D-amino acids and free tRNA molecules, this enzyme counteracts the toxicity associated with the formation of D-aminoacyl-tRNA entities in vivo and helps enforce protein L-homochirality. This Alkalilimnicola ehrlichii (strain ATCC BAA-1101 / DSM 17681 / MLHE-1) protein is D-aminoacyl-tRNA deacylase.